Consider the following 387-residue polypeptide: UPF0400 protein C337.03 (387 aa).

Residues 1–133 (MALTPDTVSS…SLQERFNNAE (133 aa)) enclose the CID domain. Residues 177–255 (KSYLEKQSDY…IISNLENKES (79 aa)) are a coiled coil. The disordered stretch occupies residues 257-387 (TATSTLTDAG…SSAAGLYGDS (131 aa)). Over residues 283-297 (SPPSSSPNSDDAYSP) the composition is skewed to low complexity. Over residues 298-323 (QVDSYSPSINSVPYTSNIVENPSEDN) the composition is skewed to polar residues. The span at 353-365 (NEEESKELPEDSD) shows a compositional bias: acidic residues. A compositionally biased stretch (low complexity) spans 370–379 (DSSPSSDDSS). Ser372 bears the Phosphoserine mark.

This sequence belongs to the UPF0400 (RTT103) family.

The polypeptide is UPF0400 protein C337.03 (Schizosaccharomyces pombe (strain 972 / ATCC 24843) (Fission yeast)).